The chain runs to 683 residues: Protein kinase C eta type (683 aa).

Residues 1–118 (MSSGTMKFNG…LRTAGTSDTF (118 aa)) enclose the C2 domain. Phosphoserine is present on residues S28 and S32. 2 consecutive Phorbol-ester/DAG-type zinc fingers follow at residues 171 to 222 (GHKF…VTAC) and 245 to 295 (PHKF…APNC). S317 is modified (phosphoserine). The 260-residue stretch at 355-614 (FEFIRVLGKG…EHEILRHPFF (260 aa)) folds into the Protein kinase domain. ATP-binding positions include 361-369 (LGKGSFGKV) and K384. The active-site Proton acceptor is the D479. Position 513 is a phosphothreonine; by PDPK1 (T513). The AGC-kinase C-terminal domain occupies 615–683 (KEIDWAQLNH…FSYVSPELQL (69 aa)). Position 656 is a phosphothreonine (T656). S675 carries the post-translational modification Phosphoserine.

It belongs to the protein kinase superfamily. AGC Ser/Thr protein kinase family. PKC subfamily. In terms of assembly, interacts with FYN. Interacts with RALA. Interacts with DGKQ. Predominantly expressed in lung and skin.

It localises to the cytoplasm. The enzyme catalyses L-seryl-[protein] + ATP = O-phospho-L-seryl-[protein] + ADP + H(+). It carries out the reaction L-threonyl-[protein] + ATP = O-phospho-L-threonyl-[protein] + ADP + H(+). Novel PKCs (PRKCD, PRKCE, PRKCH and PRKCQ) are calcium-insensitive, but activated by diacylglycerol (DAG) and phosphatidylserine. Three specific sites; Thr-513 (activation loop of the kinase domain), Thr-656 (turn motif) and Ser-675 (hydrophobic region), need to be phosphorylated for its full activation. In terms of biological role, calcium-independent, phospholipid- and diacylglycerol (DAG)-dependent serine/threonine-protein kinase that is involved in the regulation of cell differentiation in keratinocytes and pre-B cell receptor, mediates regulation of epithelial tight junction integrity and foam cell formation, and is required for glioblastoma proliferation and apoptosis prevention in MCF-7 cells. In keratinocytes, binds and activates the tyrosine kinase FYN, which in turn blocks epidermal growth factor receptor (EGFR) signaling and leads to keratinocyte growth arrest and differentiation. Associates with the cyclin CCNE1-CDK2-CDKN1B complex and inhibits CDK2 kinase activity, leading to RB1 dephosphorylation and thereby G1 arrest in keratinocytes. In association with RALA activates actin depolymerization, which is necessary for keratinocyte differentiation. In the pre-B cell receptor signaling, functions downstream of BLNK by up-regulating IRF4, which in turn activates L chain gene rearrangement. Regulates epithelial tight junctions (TJs) by phosphorylating occludin (OCLN) on threonine residues, which is necessary for the assembly and maintenance of TJs. In association with PLD2 and via TLR4 signaling, is involved in lipopolysaccharide (LPS)-induced RGS2 down-regulation and foam cell formation. Upon PMA stimulation, mediates glioblastoma cell proliferation by activating the mTOR pathway, the PI3K/AKT pathway and the ERK1-dependent phosphorylation of ELK1. Involved in the protection of glioblastoma cells from irradiation-induced apoptosis by preventing caspase-9 activation. In camptothecin-treated MCF-7 cells, regulates NF-kappa-B upstream signaling by activating IKBKB, and confers protection against DNA damage-induced apoptosis. Promotes oncogenic functions of ATF2 in the nucleus while blocking its apoptotic function at mitochondria. Phosphorylates ATF2 which promotes its nuclear retention and transcriptional activity and negatively regulates its mitochondrial localization. The chain is Protein kinase C eta type (Prkch) from Mus musculus (Mouse).